The sequence spans 266 residues: Ras-like protein family member 12 (266 aa).

Residues 27 to 34 (GRRGAGKS), 74 to 78 (DTADL), and 134 to 137 (NKLD) each bind GTP.

The protein belongs to the small GTPase superfamily. Ras family.

It catalyses the reaction GTP + H2O = GDP + phosphate + H(+). This is Ras-like protein family member 12 (Rasl12) from Mus musculus (Mouse).